We begin with the raw amino-acid sequence, 711 residues long: Nuclear intron maturase 1, mitochondrial (711 aa).

The 313-residue stretch at 147 to 459 (KDKISMNGGE…RGIQFLDHII (313 aa)) folds into the Reverse transcriptase domain. Residues 484 to 653 (GTLLSVSASL…QVLQEYIRLQ (170 aa)) are intron maturase type-2.

The protein belongs to the plant nuclear intron maturase (nMat) family. Expressed at low levels in seedlings and accumulates in adult plants.

It localises to the mitochondrion. Functionally, nuclear-encoded maturase required for splicing of group-II introns in mitochondria. Necessary for mitochondrial biogenesis during early developmental stages. Involved in the splicing of mitochondrial NAD4 transcripts. Required for trans-splicing of NAD1 intron 1 and also functions in cis-splicing of NAD2 intron 1 and NAD4 intron 2. Required for the regulation of fundamental metabolic pathways such as amino acid metabolism, triacylglycerol degradation and polysaccharide synthesis (cellulose and starch) during the early stage of plant growth. Implicated in stress responses. The sequence is that of Nuclear intron maturase 1, mitochondrial from Arabidopsis thaliana (Mouse-ear cress).